The following is a 505-amino-acid chain: ATP synthase subunit alpha (505 aa).

170–177 (GDRQTGKS) serves as a coordination point for ATP.

The protein belongs to the ATPase alpha/beta chains family. F-type ATPases have 2 components, CF(1) - the catalytic core - and CF(0) - the membrane proton channel. CF(1) has five subunits: alpha(3), beta(3), gamma(1), delta(1), epsilon(1). CF(0) has four main subunits: a(1), b(1), b'(1) and c(9-12).

The protein localises to the cellular thylakoid membrane. It carries out the reaction ATP + H2O + 4 H(+)(in) = ADP + phosphate + 5 H(+)(out). In terms of biological role, produces ATP from ADP in the presence of a proton gradient across the membrane. The alpha chain is a regulatory subunit. The chain is ATP synthase subunit alpha from Prochlorococcus marinus (strain AS9601).